The sequence spans 315 residues: MKPRHIPVFDGHNDALTRLWLSDHPDPVHAFIHERLVGHLDLKRCQEAGFIGGMFAIFLPPYSYVQQHHSNKLFDQNASDFTQQQIEQICLEQLDLAHQLAQYSKNIKICTSVQDIQDCRAEKKLAIVLHMEGAEALQQNPDLLDVFYERGLRSIGPLWNRPSRFGHGLNAKFPHSPDTGAGLTSDGKDFIKRCANKKMVIDVSHMNEKAFWNTVDILQQPIVATHSNSHALCPQARNLTDPQLKAIRESKGMVGVNFDVAFLRSDGQRNADTSIDVILEHLEYLMDRVAPLLHPRSKLRKGTHKRTPGRAGDAD.

The segment covering 296–308 has biased composition (basic residues); the sequence is RSKLRKGTHKRTP. Residues 296 to 315 are disordered; it reads RSKLRKGTHKRTPGRAGDAD.

It belongs to the metallo-dependent hydrolases superfamily. Peptidase M19 family.

This is an uncharacterized protein from Acinetobacter calcoaceticus.